Here is a 122-residue protein sequence, read N- to C-terminus: Serum amyloid A-1 protein (122 aa).

Positions 1-19 (MKLLSGLLLCSLVLGVSSQ) are cleaved as a signal peptide. Residues 20 to 45 (RWFSFIGEATQGAWDMWRAYSDMREA) are important for amyloid formation. A disordered region spans residues 87-122 (MGHGAEDSMADQAANEWGRSGKDPNHFRPKGLPDKY). The segment covering 105-122 (RSGKDPNHFRPKGLPDKY) has biased composition (basic and acidic residues).

Belongs to the SAA family. As to quaternary structure, homohexamer; dimer of trimers. Can form amyloid fibrils after partial proteolysis; the native, undenatured protein does not form amyloid fibrils (in vitro). Apolipoprotein of the HDL complex. Binds to heparin. In terms of tissue distribution, detected in liver.

Its subcellular location is the secreted. Major acute phase protein. The protein is Serum amyloid A-1 protein (SAA1) of Oryctolagus cuniculus (Rabbit).